Reading from the N-terminus, the 515-residue chain is 1-pyrroline-5-carboxylate dehydrogenase (515 aa).

Catalysis depends on residues Glu-286 and Cys-320.

The protein belongs to the aldehyde dehydrogenase family. RocA subfamily.

It carries out the reaction L-glutamate 5-semialdehyde + NAD(+) + H2O = L-glutamate + NADH + 2 H(+). The protein operates within amino-acid degradation; L-proline degradation into L-glutamate; L-glutamate from L-proline: step 2/2. This chain is 1-pyrroline-5-carboxylate dehydrogenase, found in Bacillus pumilus (strain SAFR-032).